Here is a 171-residue protein sequence, read N- to C-terminus: Spiderine-2b (171 aa).

The N-terminal stretch at 1–18 is a signal peptide; that stretch reads MKFALVLLGFCAFYLVNA. Positions 19–58 are cleaved as a propeptide — removed in mature form; that stretch reads TGDLETELEASDLQELQEALDLIAETPLESLEAEELEEAR. Residues 59–104 are linear cationic cytotoxin domain; it reads KFKFPKINWGKLASKAKDVYKKGQKLAKNKNVKKALKYGKQLAENL. The 54-residue stretch at 118-171 folds into the Oxytoxin-type inhibitor cystine knot (ICK) domain; that stretch reads NNKCWAIGTRCTDDCDCCPEHHCHCPAKSWTFGLIPCSCQVTESDKVNKCPPAE. 5 disulfide bridges follow: C121/C135, C128/C140, C132/C167, C134/C156, and C142/C154.

Belongs to the spiderine family. Cationic/spiderine subfamily. As to expression, expressed by the venom gland.

It is found in the secreted. Functionally, has antimicrobial, insecticidal, cytolytic and cytotoxic activity. The chain is Spiderine-2b from Oxyopes takobius (Lynx spider).